Consider the following 429-residue polypeptide: Phosphoribosylamine--glycine ligase (429 aa).

Residues 108-315 enclose the ATP-grasp domain; it reads KDFLARHRIP…LVLLVEAALA (208 aa). 134 to 195 is a binding site for ATP; sequence LHEQGAPIVI…EEFLDGEEAS (62 aa). 2 residues coordinate Mg(2+): Glu285 and Asn287.

This sequence belongs to the GARS family. It depends on Mg(2+) as a cofactor. Mn(2+) is required as a cofactor.

The catalysed reaction is 5-phospho-beta-D-ribosylamine + glycine + ATP = N(1)-(5-phospho-beta-D-ribosyl)glycinamide + ADP + phosphate + H(+). It participates in purine metabolism; IMP biosynthesis via de novo pathway; N(1)-(5-phospho-D-ribosyl)glycinamide from 5-phospho-alpha-D-ribose 1-diphosphate: step 2/2. This Pseudomonas aeruginosa (strain ATCC 15692 / DSM 22644 / CIP 104116 / JCM 14847 / LMG 12228 / 1C / PRS 101 / PAO1) protein is Phosphoribosylamine--glycine ligase.